A 286-amino-acid polypeptide reads, in one-letter code: Glycine--tRNA ligase alpha subunit (286 aa).

It belongs to the class-II aminoacyl-tRNA synthetase family. Tetramer of two alpha and two beta subunits.

The protein resides in the cytoplasm. The catalysed reaction is tRNA(Gly) + glycine + ATP = glycyl-tRNA(Gly) + AMP + diphosphate. The polypeptide is Glycine--tRNA ligase alpha subunit (Campylobacter lari (strain RM2100 / D67 / ATCC BAA-1060)).